Reading from the N-terminus, the 635-residue chain is Sodium- and chloride-dependent creatine transporter 1 (635 aa).

Residues 1-28 (MAKKSAENGIYSVSGDEKKGPLIAPGPD) form a disordered region. At 1–60 (MAKKSAENGIYSVSGDEKKGPLIAPGPDGAPAKGDGPVGLGTPGGRLAVPPRETWTRQMD) the chain is on the cytoplasmic side. The residue at position 42 (threonine 42) is a Phosphothreonine. The helical transmembrane segment at 61–81 (FIMSCVGFAVGLGNVWRFPYL) threads the bilayer. Topologically, residues 82-87 (CYKNGG) are extracellular. The helical transmembrane segment at 88–108 (GVFLIPYVLIALVGGIPIFFL) threads the bilayer. Residues 109–138 (EISLGQFMKAGSINVWNICPLFKGLGYASM) lie on the Cytoplasmic side of the membrane. The chain crosses the membrane as a helical span at residues 139–159 (VIVFYCNTYYIMVLAWGFYYL). Topologically, residues 160–230 (VKSFTTTLPW…LSGGLEVPGA (71 aa)) are extracellular. Asparagine 192 and asparagine 197 each carry an N-linked (GlcNAc...) asparagine glycan. The chain crosses the membrane as a helical span at residues 231 to 251 (LNWEVTLCLLACWVLVYFCVW). Residues 252-269 (KGVKSTGKIVYFTATFPY) lie on the Cytoplasmic side of the membrane. Residues 270–290 (VVLVVLLVRGVLLPGALDGII) form a helical membrane-spanning segment. The Extracellular segment spans residues 291 to 304 (YYLKPDWSKLGSPQ). Residues 305–325 (VWIDAGTQIFFSYAIGLGALT) traverse the membrane as a helical segment. Topologically, residues 326–341 (ALGSYNRFNNNCYKDA) are cytoplasmic. A helical membrane pass occupies residues 342 to 362 (IILALINSGTSFFAGFVVFSI). The Extracellular segment spans residues 363-394 (LGFMAAEQGVHISKVAESGPGLAFIAYPRAVT). The chain crosses the membrane as a helical span at residues 395–415 (LMPVAPLWAALFFFMLLLLGL). At 416–444 (DSQFVGVEGFITGLLDLLPASYYFRFQRE) the chain is on the cytoplasmic side. A helical transmembrane segment spans residues 445 to 465 (ISVALCCALCFVIDLSMVTDG). The Extracellular portion of the chain corresponds to 466-479 (GMYVFQLFDYYSAS). The helical transmembrane segment at 480–500 (GTTLLWQAFWECVVVAWVYGA) threads the bilayer. Topologically, residues 501–520 (DRFMDDIACMIGYRPCPWMK) are cytoplasmic. A helical membrane pass occupies residues 521 to 541 (WCWSFFTPLVCMGIFIFNVVY). Residues 542 to 560 (YEPLVYNNTYVYPWWGEAM) lie on the Extracellular side of the membrane. The N-linked (GlcNAc...) asparagine glycan is linked to asparagine 548. The helical transmembrane segment at 561 to 581 (GWAFALSSMLCVPLHLLGCLL) threads the bilayer. The Cytoplasmic portion of the chain corresponds to 582–635 (RAKGTMAERWQHLTQPIWGLHHLEYRAQDADVRGLTTLTPVSESSKVVVVESVM). Threonine 617 and threonine 620 each carry phosphothreonine. Serine 623 carries the post-translational modification Phosphoserine.

This sequence belongs to the sodium:neurotransmitter symporter (SNF) (TC 2.A.22) family. SLC6A8 subfamily. Post-translationally, glycosylated. In terms of tissue distribution, predominantly expressed in skeletal muscle and kidney. Also found in brain, heart, colon, testis and prostate.

It localises to the cell membrane. Its subcellular location is the apical cell membrane. It carries out the reaction creatine(out) + chloride(out) + 2 Na(+)(out) = creatine(in) + chloride(in) + 2 Na(+)(in). In terms of biological role, creatine:sodium symporter which mediates the uptake of creatine. Plays an important role in supplying creatine to the brain via the blood-brain barrier. The protein is Sodium- and chloride-dependent creatine transporter 1 (SLC6A8) of Homo sapiens (Human).